We begin with the raw amino-acid sequence, 206 residues long: Large ribosomal subunit protein uL4 (206 aa).

This sequence belongs to the universal ribosomal protein uL4 family. As to quaternary structure, part of the 50S ribosomal subunit.

One of the primary rRNA binding proteins, this protein initially binds near the 5'-end of the 23S rRNA. It is important during the early stages of 50S assembly. It makes multiple contacts with different domains of the 23S rRNA in the assembled 50S subunit and ribosome. Its function is as follows. Forms part of the polypeptide exit tunnel. This is Large ribosomal subunit protein uL4 from Nitratidesulfovibrio vulgaris (strain ATCC 29579 / DSM 644 / CCUG 34227 / NCIMB 8303 / VKM B-1760 / Hildenborough) (Desulfovibrio vulgaris).